A 237-amino-acid chain; its full sequence is Ribonuclease PH (237 aa).

Phosphate is bound by residues arginine 86 and 124 to 126; that span reads GTR.

Belongs to the RNase PH family. As to quaternary structure, homohexameric ring arranged as a trimer of dimers.

The catalysed reaction is tRNA(n+1) + phosphate = tRNA(n) + a ribonucleoside 5'-diphosphate. In terms of biological role, phosphorolytic 3'-5' exoribonuclease that plays an important role in tRNA 3'-end maturation. Removes nucleotide residues following the 3'-CCA terminus of tRNAs; can also add nucleotides to the ends of RNA molecules by using nucleoside diphosphates as substrates, but this may not be physiologically important. Probably plays a role in initiation of 16S rRNA degradation (leading to ribosome degradation) during starvation. The sequence is that of Ribonuclease PH from Methylobacterium nodulans (strain LMG 21967 / CNCM I-2342 / ORS 2060).